The sequence spans 579 residues: Arginine--tRNA ligase (579 aa).

The short motif at 123-133 (PNLAKEMHVGH) is the 'HIGH' region element.

Belongs to the class-I aminoacyl-tRNA synthetase family. As to quaternary structure, monomer.

It is found in the cytoplasm. It carries out the reaction tRNA(Arg) + L-arginine + ATP = L-arginyl-tRNA(Arg) + AMP + diphosphate. In Saccharophagus degradans (strain 2-40 / ATCC 43961 / DSM 17024), this protein is Arginine--tRNA ligase.